The primary structure comprises 944 residues: 2-oxoglutarate dehydrogenase E1 component (944 aa).

Positions 914 to 944 (RRRRSSPAEGDPTVHKKEQERIVSDSLTRKN) are disordered. A compositionally biased stretch (basic and acidic residues) spans 925-936 (PTVHKKEQERIV).

The protein belongs to the alpha-ketoglutarate dehydrogenase family. Homodimer. Part of the 2-oxoglutarate dehydrogenase (OGDH) complex composed of E1 (2-oxoglutarate dehydrogenase), E2 (dihydrolipoamide succinyltransferase) and E3 (dihydrolipoamide dehydrogenase); the complex contains multiple copies of the three enzymatic components (E1, E2 and E3). It depends on thiamine diphosphate as a cofactor.

The catalysed reaction is N(6)-[(R)-lipoyl]-L-lysyl-[protein] + 2-oxoglutarate + H(+) = N(6)-[(R)-S(8)-succinyldihydrolipoyl]-L-lysyl-[protein] + CO2. E1 component of the 2-oxoglutarate dehydrogenase (OGDH) complex which catalyzes the decarboxylation of 2-oxoglutarate, the first step in the conversion of 2-oxoglutarate to succinyl-CoA and CO(2). The chain is 2-oxoglutarate dehydrogenase E1 component from Bacillus licheniformis (strain ATCC 14580 / DSM 13 / JCM 2505 / CCUG 7422 / NBRC 12200 / NCIMB 9375 / NCTC 10341 / NRRL NRS-1264 / Gibson 46).